The primary structure comprises 585 residues: ADP-ribosylation factor-binding protein GGA2 (585 aa).

Residues 33-169 (ACRMSLAEPD…LLKYKGYAFP (137 aa)) form the VHS domain. Residues K180 and K287 each participate in a glycyl lysine isopeptide (Lys-Gly) (interchain with G-Cter in ubiquitin) cross-link. Residues 196–321 (EIAQAAKLEE…LLEKFNLLKN (126 aa)) form the GAT domain. The tract at residues 358–378 (LDEAPSQGNNNTNGTGTPAAA) is disordered. Residues 365-374 (GNNNTNGTGT) show a composition bias toward low complexity. One can recognise a GAE domain in the interval 466–581 (TTTAPARTLV…TQAEETAVFT (116 aa)).

In terms of assembly, binds to ARF1 and ARF2.

The protein resides in the golgi apparatus. It is found in the trans-Golgi network. Functionally, may play a role in the regulation of membrane traffic through the trans-Golgi network. The protein is ADP-ribosylation factor-binding protein GGA2 (GGA2) of Saccharomyces cerevisiae (strain ATCC 204508 / S288c) (Baker's yeast).